The following is a 365-amino-acid chain: 3-isopropylmalate dehydrogenase (365 aa).

Residue 80–91 (GPKWGTGSVRPE) coordinates NAD(+). R98, R108, R137, and D226 together coordinate substrate. Positions 226, 251, and 255 each coordinate Mg(2+). NAD(+) is bound at residue 290–301 (GSAPDLPKGKVN).

Belongs to the isocitrate and isopropylmalate dehydrogenases family. In terms of assembly, homodimer. Mg(2+) is required as a cofactor. Mn(2+) serves as cofactor.

Its subcellular location is the cytoplasm. The catalysed reaction is (2R,3S)-3-isopropylmalate + NAD(+) = 4-methyl-2-oxopentanoate + CO2 + NADH. It participates in amino-acid biosynthesis; L-leucine biosynthesis; L-leucine from 3-methyl-2-oxobutanoate: step 3/4. Functionally, catalyzes the oxidation of 3-carboxy-2-hydroxy-4-methylpentanoate (3-isopropylmalate) to 3-carboxy-4-methyl-2-oxopentanoate. The product decarboxylates to 4-methyl-2 oxopentanoate. This Maudiozyma exigua (Yeast) protein is 3-isopropylmalate dehydrogenase (LEU2).